The chain runs to 138 residues: Oleosin G (138 aa).

3 helical membrane-spanning segments follow: residues 14–34 (ILGF…TGLT), 48–68 (VLIF…VAVA), and 69–89 (GFLS…WLYN). Positions 47–58 (PVLIFFSPILIP) match the Proline-knot motif.

Belongs to the oleosin family. In terms of tissue distribution, expressed in megagametophytes (at protein level).

It is found in the lipid droplet. The protein localises to the membrane. This chain is Oleosin G, found in Pinus massoniana (Chinese red pine).